Reading from the N-terminus, the 344-residue chain is Glycerol-3-phosphate dehydrogenase [NAD(P)+] (344 aa).

NADPH is bound by residues W18, H38, and K115. K115, G144, and T146 together coordinate sn-glycerol 3-phosphate. An NADPH-binding site is contributed by A148. 5 residues coordinate sn-glycerol 3-phosphate: K199, D252, S262, R263, and N264. K199 functions as the Proton acceptor in the catalytic mechanism. R263 contacts NADPH. Positions 288 and 290 each coordinate NADPH.

This sequence belongs to the NAD-dependent glycerol-3-phosphate dehydrogenase family.

The protein localises to the cytoplasm. It carries out the reaction sn-glycerol 3-phosphate + NAD(+) = dihydroxyacetone phosphate + NADH + H(+). The enzyme catalyses sn-glycerol 3-phosphate + NADP(+) = dihydroxyacetone phosphate + NADPH + H(+). It functions in the pathway membrane lipid metabolism; glycerophospholipid metabolism. Catalyzes the reduction of the glycolytic intermediate dihydroxyacetone phosphate (DHAP) to sn-glycerol 3-phosphate (G3P), the key precursor for phospholipid synthesis. The protein is Glycerol-3-phosphate dehydrogenase [NAD(P)+] of Hydrogenovibrio crunogenus (strain DSM 25203 / XCL-2) (Thiomicrospira crunogena).